The following is a 147-amino-acid chain: NADH-quinone oxidoreductase subunit A (147 aa).

The next 3 membrane-spanning stretches (helical) occupy residues 16 to 36 (FAIF…GGWF), 68 to 88 (FYLV…LFAW), and 98 to 118 (VGFV…VYLV).

This sequence belongs to the complex I subunit 3 family. NDH-1 is composed of 13 different subunits. Subunits NuoA, H, J, K, L, M, N constitute the membrane sector of the complex.

It localises to the cell inner membrane. The enzyme catalyses a quinone + NADH + 5 H(+)(in) = a quinol + NAD(+) + 4 H(+)(out). Its function is as follows. NDH-1 shuttles electrons from NADH, via FMN and iron-sulfur (Fe-S) centers, to quinones in the respiratory chain. The immediate electron acceptor for the enzyme in this species is believed to be ubiquinone. Couples the redox reaction to proton translocation (for every two electrons transferred, four hydrogen ions are translocated across the cytoplasmic membrane), and thus conserves the redox energy in a proton gradient. This Citrobacter koseri (strain ATCC BAA-895 / CDC 4225-83 / SGSC4696) protein is NADH-quinone oxidoreductase subunit A.